The sequence spans 410 residues: Gamma-glutamyl phosphate reductase (410 aa).

It belongs to the gamma-glutamyl phosphate reductase family.

The protein localises to the cytoplasm. The catalysed reaction is L-glutamate 5-semialdehyde + phosphate + NADP(+) = L-glutamyl 5-phosphate + NADPH + H(+). It participates in amino-acid biosynthesis; L-proline biosynthesis; L-glutamate 5-semialdehyde from L-glutamate: step 2/2. Its function is as follows. Catalyzes the NADPH-dependent reduction of L-glutamate 5-phosphate into L-glutamate 5-semialdehyde and phosphate. The product spontaneously undergoes cyclization to form 1-pyrroline-5-carboxylate. This Campylobacter jejuni subsp. jejuni serotype O:2 (strain ATCC 700819 / NCTC 11168) protein is Gamma-glutamyl phosphate reductase.